The following is a 221-amino-acid chain: PSALRLVLLNKADAPEALKSFAEVLKVRLFEKQFGWPVFIISAVARKALDPLKYKLLEIVQDARKKRPKEKAESVIIKPKAVVHRTKGQFQIKPDPEVQGGFIITGEKPERWILQTDFENDEAVGYLADRLSKLGIEDGLRKAGAHVGANVTIGGISFEWEPMTTAGDDPILTGRGTDVRLEQTSRISAAERKRASQVRRGLIDELDYGEDQEASRERWEG.

The region spanning 1–61 (PSALRLVLLN…LKYKLLEIVQ (61 aa)) is the OBG-type G domain. GTP-binding positions include 10 to 13 (NKAD) and 42 to 44 (SAV). The 81-residue stretch at 82-162 (VVHRTKGQFQ…IGGISFEWEP (81 aa)) folds into the OCT domain.

Belongs to the TRAFAC class OBG-HflX-like GTPase superfamily. OBG GTPase family. Monomer. Mg(2+) serves as cofactor.

It localises to the cytoplasm. Functionally, an essential GTPase which binds GTP, GDP and possibly (p)ppGpp with moderate affinity, with high nucleotide exchange rates and a fairly low GTP hydrolysis rate. Plays a role in control of the cell cycle, stress response, ribosome biogenesis and in those bacteria that undergo differentiation, in morphogenesis control. The polypeptide is GTPase Obg (Corynebacterium melassecola).